The sequence spans 205 residues: Glycerol-3-phosphate acyltransferase (205 aa).

6 helical membrane-spanning segments follow: residues 5-25 (LALGIWAASYLAGSLPAGYLA), 54-74 (GPAAAVLLFDVFKGLFAVWLA), 87-107 (IVLGAGLAAIVGHSWPVWLAF), 117-137 (VGLLLGMHWPVALTVAAVWGV), 138-158 (CFAVTRIVSFASIVAAAATPL), and 162-182 (LWRAPLPFTLFGLLGGIYIVW).

It belongs to the PlsY family. As to quaternary structure, probably interacts with PlsX.

The protein resides in the cell inner membrane. The enzyme catalyses an acyl phosphate + sn-glycerol 3-phosphate = a 1-acyl-sn-glycero-3-phosphate + phosphate. Its pathway is lipid metabolism; phospholipid metabolism. In terms of biological role, catalyzes the transfer of an acyl group from acyl-phosphate (acyl-PO(4)) to glycerol-3-phosphate (G3P) to form lysophosphatidic acid (LPA). This enzyme utilizes acyl-phosphate as fatty acyl donor, but not acyl-CoA or acyl-ACP. In Gloeobacter violaceus (strain ATCC 29082 / PCC 7421), this protein is Glycerol-3-phosphate acyltransferase.